The following is a 414-amino-acid chain: Transposon Ty4-J Gag polyprotein (414 aa).

Positions 39 to 115 (RKVSIKDEQV…IQLLETNENN (77 aa)) form a coiled coil. Positions 378–414 (GAQRQQPLKSSAKRTKVLEQDTKKVEQSVQQQKTGNY) are disordered. Over residues 393–403 (KVLEQDTKKVE) the composition is skewed to basic and acidic residues. Polar residues predominate over residues 404-414 (QSVQQQKTGNY).

In terms of biological role, capsid protein (CA) is the structural component of the virus-like particle (VLP), forming the shell that encapsulates the retrotransposons dimeric RNA genome. This Saccharomyces cerevisiae (strain ATCC 204508 / S288c) (Baker's yeast) protein is Transposon Ty4-J Gag polyprotein (TY4A-J).